The primary structure comprises 830 residues: Venom phosphodiesterase (830 aa).

SMB domains follow at residues proline 7–threonine 50 and glutamine 51–serine 95. Cystine bridges form between cysteine 11/cysteine 15, cysteine 11/cysteine 28, cysteine 15/cysteine 46, cysteine 26/cysteine 28, cysteine 26/cysteine 39, cysteine 32/cysteine 38, cysteine 39/cysteine 46, cysteine 55/cysteine 60, cysteine 55/cysteine 72, cysteine 60/cysteine 90, cysteine 70/cysteine 72, cysteine 70/cysteine 83, cysteine 76/cysteine 82, cysteine 83/cysteine 90, cysteine 101/cysteine 147, and cysteine 109/cysteine 321. Asparagine 16 is a glycosylation site (N-linked (GlcNAc...) asparagine). Positions arginine 35–alanine 37 match the Cell attachment site motif. A divalent metal cation contacts are provided by aspartate 124 and threonine 162. Threonine 162 acts as the AMP-threonine intermediate in catalysis. 3 N-linked (GlcNAc...) asparagine glycosylation sites follow: asparagine 193, asparagine 236, and asparagine 247. Position 248 (lysine 248) interacts with AMP. Residues aspartate 282, histidine 286, aspartate 329, and histidine 330 each contribute to the a divalent metal cation site. Histidine 286 is a binding site for AMP. Intrachain disulfides connect cysteine 337–cysteine 434, cysteine 385–cysteine 772, cysteine 518–cysteine 575, cysteine 531–cysteine 632, cysteine 533–cysteine 617, and cysteine 740–cysteine 750. A divalent metal cation is bound at residue histidine 439. Residue asparagine 489 is glycosylated (N-linked (GlcNAc...) asparagine). N-linked (GlcNAc...) asparagine glycans are attached at residues asparagine 723 and asparagine 742.

The protein belongs to the nucleotide pyrophosphatase/phosphodiesterase family. In terms of assembly, monomer cleaved in two subunits; disulfide-linked. Is synthesized as a single-chain protein and is subsequently cleaved to form a two-subunit protein held together with disulfide bonds. A divalent metal cation is required as a cofactor. In terms of tissue distribution, expressed by venom gland.

It is found in the secreted. The enzyme catalyses ADP + H2O = AMP + phosphate + H(+). Hydrolyzes ADP with high activity. Shows weak or no activity on 5'-AMP, 5'-GMP, 3'-AMP, ATP, cAMP, and cGMP. Is devoid of monophosphatase and proteinase activities. Dose-dependently inhibits platelet aggregation induced by ADP and collagen. This chain is Venom phosphodiesterase, found in Naja atra (Chinese cobra).